Reading from the N-terminus, the 490-residue chain is GTPase Der (490 aa).

EngA-type G domains lie at 3–166 (PVIA…PRDE) and 196–369 (IKIA…KSAV). Residues 9-16 (GRPNVGKS), 56-60 (DTGGI), 118-121 (NKID), 202-209 (GRPNVGKS), 249-253 (DTAGV), and 314-317 (NKWD) each bind GTP. The 85-residue stretch at 370-454 (TRWPTSRLTQ…PIRIEFKGGE (85 aa)) folds into the KH-like domain. The disordered stretch occupies residues 452–490 (GGENPYEGNKNTLTDRQVNKKRRMMSHHKKADKKRRDKR). Positions 470–490 (NKKRRMMSHHKKADKKRRDKR) are enriched in basic residues.

It belongs to the TRAFAC class TrmE-Era-EngA-EngB-Septin-like GTPase superfamily. EngA (Der) GTPase family. In terms of assembly, associates with the 50S ribosomal subunit.

GTPase that plays an essential role in the late steps of ribosome biogenesis. The polypeptide is GTPase Der (Pseudomonas syringae pv. syringae (strain B728a)).